Here is a 457-residue protein sequence, read N- to C-terminus: MQKYISEARLLLALAIPVILAQIAQTAMGFVDTVMAGGYSATDMAAVAIGTSIWLPAILFGHGLLLALTPVIAQLNGSGRRERIAHQVRQGFWLAGFVSVLIMLVLWNAGYIIRYMENIDPALADKAVGYLRALLWGAPGYLFFQVARNQCEGLAKAKPGMVMGFIGLLVNIPVNYIFIYGHFGMPELGGVGCGVATAAVYWVMFLAMVSYIKRARSMRDIRNEKGTAKPEPAVMKRLIQLGLPIALALFLEVTLFAVVALLVSPLGIVDVAGHQIALNFSSLMFVLPMSLAAAVTIRVGYRLGQGSTLDAQTAARTGLMVGVCMATLTAIFTVSLREQIALLYNDNPEVVTLAAHLMLLAAVYQISDSIQVIGSGILRGYKDTRSIFYITFTAYWVLGLPSGYILALTDLVVEPMGPAGFWIGFIIGLTSAAIMMMLRMRFLQRMPSAIILQRASR.

At 1–10 (MQKYISEARL) the chain is on the cytoplasmic side. A helical membrane pass occupies residues 11–31 (LLALAIPVILAQIAQTAMGFV). The Periplasmic segment spans residues 32-52 (DTVMAGGYSATDMAAVAIGTS). The chain crosses the membrane as a helical span at residues 53-73 (IWLPAILFGHGLLLALTPVIA). Over 74–92 (QLNGSGRRERIAHQVRQGF) the chain is Cytoplasmic. The helical transmembrane segment at 93–113 (WLAGFVSVLIMLVLWNAGYII) threads the bilayer. Residues 114–126 (RYMENIDPALADK) lie on the Periplasmic side of the membrane. The chain crosses the membrane as a helical span at residues 127–147 (AVGYLRALLWGAPGYLFFQVA). Topologically, residues 148–159 (RNQCEGLAKAKP) are cytoplasmic. A helical transmembrane segment spans residues 160–180 (GMVMGFIGLLVNIPVNYIFIY). The Periplasmic segment spans residues 181-188 (GHFGMPEL). The helical transmembrane segment at 189–209 (GGVGCGVATAAVYWVMFLAMV) threads the bilayer. Residues 210–242 (SYIKRARSMRDIRNEKGTAKPEPAVMKRLIQLG) lie on the Cytoplasmic side of the membrane. A helical membrane pass occupies residues 243–263 (LPIALALFLEVTLFAVVALLV). Topologically, residues 264–275 (SPLGIVDVAGHQ) are periplasmic. Residues 276–296 (IALNFSSLMFVLPMSLAAAVT) form a helical membrane-spanning segment. At 297–313 (IRVGYRLGQGSTLDAQT) the chain is on the cytoplasmic side. Residues 314-334 (AARTGLMVGVCMATLTAIFTV) traverse the membrane as a helical segment. The Periplasmic segment spans residues 335 to 349 (SLREQIALLYNDNPE). A helical membrane pass occupies residues 350-370 (VVTLAAHLMLLAAVYQISDSI). The Cytoplasmic segment spans residues 371 to 386 (QVIGSGILRGYKDTRS). Residues 387–407 (IFYITFTAYWVLGLPSGYILA) traverse the membrane as a helical segment. Over 408-417 (LTDLVVEPMG) the chain is Periplasmic. Residues 418-438 (PAGFWIGFIIGLTSAAIMMML) traverse the membrane as a helical segment. Residues 439 to 457 (RMRFLQRMPSAIILQRASR) lie on the Cytoplasmic side of the membrane.

Belongs to the multi antimicrobial extrusion (MATE) (TC 2.A.66.1) family. MdtK subfamily.

Its subcellular location is the cell inner membrane. Its function is as follows. Multidrug efflux pump that functions probably as a Na(+)/drug antiporter. This chain is Multidrug resistance protein MdtK, found in Shigella flexneri serotype 5b (strain 8401).